Here is a 314-residue protein sequence, read N- to C-terminus: MNKDTTMYCSAYIRDVFFCEIGVGISANSCLLLFHIFMFIRGHRPRLTDLPIGLMALIHLLMLLLAAYIAKDFFMSSGWDDITCKLFIFLHRFFRSLSVCATCMLSVFQTIILCPQSSHLAKFKPNSPYHLSCFFIFMSIFYTSISSHILIAAIATQNLTSVNLIYITKSCSFLPMSSSMQRTFSTLLAFRNAFLIGLMGLSTCYMATLLCRHKTRSQRLQNSKLSPKATPEQRAIWTLLMFMSFFLVMSTFDSIISYSRTIFQGNPSLYCAQILVAHSYAVVSPMLVLSNENRLTNPLISMYERIVRLDFLCW.

The Extracellular portion of the chain corresponds to 1 to 19; it reads MNKDTTMYCSAYIRDVFFC. The chain crosses the membrane as a helical span at residues 20–40; it reads EIGVGISANSCLLLFHIFMFI. Residues 41 to 49 lie on the Cytoplasmic side of the membrane; sequence RGHRPRLTD. A helical transmembrane segment spans residues 50–70; it reads LPIGLMALIHLLMLLLAAYIA. Residues 71 to 92 lie on the Extracellular side of the membrane; sequence KDFFMSSGWDDITCKLFIFLHR. A disulfide bridge connects residues Cys84 and Cys171. The chain crosses the membrane as a helical span at residues 93-113; that stretch reads FFRSLSVCATCMLSVFQTIIL. Topologically, residues 114–133 are cytoplasmic; sequence CPQSSHLAKFKPNSPYHLSC. A helical membrane pass occupies residues 134–154; the sequence is FFIFMSIFYTSISSHILIAAI. Residues 155–186 lie on the Extracellular side of the membrane; the sequence is ATQNLTSVNLIYITKSCSFLPMSSSMQRTFST. The N-linked (GlcNAc...) asparagine glycan is linked to Asn158. A helical transmembrane segment spans residues 187 to 207; sequence LLAFRNAFLIGLMGLSTCYMA. Topologically, residues 208 to 235 are cytoplasmic; that stretch reads TLLCRHKTRSQRLQNSKLSPKATPEQRA. Residues 236 to 256 form a helical membrane-spanning segment; it reads IWTLLMFMSFFLVMSTFDSII. Topologically, residues 257–268 are extracellular; sequence SYSRTIFQGNPS. Residues 269 to 289 traverse the membrane as a helical segment; the sequence is LYCAQILVAHSYAVVSPMLVL. Topologically, residues 290-314 are cytoplasmic; it reads SNENRLTNPLISMYERIVRLDFLCW.

The protein belongs to the G-protein coupled receptor 1 family.

It localises to the cell membrane. Functionally, putative pheromone receptor implicated in the regulation of social as well as reproductive behavior. This Rattus norvegicus (Rat) protein is Vomeronasal type-1 receptor 98 (Vom1r98).